Reading from the N-terminus, the 62-residue chain is Sperm protamine P1 (62 aa).

Residues Met-1 to Arg-62 are disordered.

Belongs to the protamine P1 family. In terms of tissue distribution, testis.

It localises to the nucleus. Its subcellular location is the chromosome. Protamines substitute for histones in the chromatin of sperm during the haploid phase of spermatogenesis. They compact sperm DNA into a highly condensed, stable and inactive complex. In Pseudantechinus bilarni (Sandstone dibbler), this protein is Sperm protamine P1 (PRM1).